A 228-amino-acid chain; its full sequence is Delta-type opioid receptor (228 aa).

A helical membrane pass occupies residues 1–3 (GIV). Over 4-13 (RYTKMKTATN) the chain is Cytoplasmic. Residues 14–38 (IYIFNLALADALATSTLPFQSAKYL) form a helical membrane-spanning segment. At 39-50 (METWPFGELLCK) the chain is on the extracellular side. Cys49 and Cys126 are joined by a disulfide. A helical membrane pass occupies residues 51–72 (AVLSIDYYNMFTSIFTLTMMSV). Residues 73 to 91 (DRYIAVCHPVKALDFRTPA) lie on the Cytoplasmic side of the membrane. Residues 92-114 (KAKLINICIWVLASGVGVPIMVM) form a helical membrane-spanning segment. Residues 115-134 (AVTRPRDGAVVCMLQFPSPS) are Extracellular-facing. Residues 135–166 (WYWDTVTKICVFLFAFVVPILVITVCYGLMLL) form a helical membrane-spanning segment. The Cytoplasmic segment spans residues 167–189 (RLRSVRLLSGSKEKDRSLRRITR). A helical transmembrane segment spans residues 190–212 (MVLVVVGAFVVCWAPIHIFVIVW). The Extracellular portion of the chain corresponds to 213-227 (TLVDIDRRDPLVVAA).

The protein belongs to the G-protein coupled receptor 1 family. In terms of assembly, may form homooligomers. Forms a heterodimer with OPRM1. Interacts with GPRASP1. Interacts with RTP4; the interaction promotes cell surface localization of the OPRD1-OPRM1 heterodimer. In terms of processing, ubiquitinated. A basal ubiquitination seems not to be related to degradation. Ubiquitination is increased upon formation of OPRM1:OPRD1 oligomers leading to proteasomal degradation; the ubiquitination is diminished by RTP4. In terms of tissue distribution, detected in myenteric plexus and smooth muscle (at protein level). Detected in brain and intestine.

It is found in the cell membrane. In terms of biological role, G-protein coupled receptor that functions as a receptor for endogenous enkephalins and for a subset of other opioids. Ligand binding causes a conformation change that triggers signaling via guanine nucleotide-binding proteins (G proteins) and modulates the activity of down-stream effectors, such as adenylate cyclase. Signaling leads to the inhibition of adenylate cyclase activity. Inhibits neurotransmitter release by reducing calcium ion currents and increasing potassium ion conductance. Plays a role in the perception of pain and in opiate-mediated analgesia. Plays a role in developing analgesic tolerance to morphine. This is Delta-type opioid receptor (OPRD1) from Sus scrofa (Pig).